A 64-amino-acid polypeptide reads, in one-letter code: Small ribosomal subunit protein bS21 (64 aa).

Residues 26-64 form a disordered region; sequence DGILSEARRRTRFERPPTRRKRKDAAKRRLAIKAARKAT. A compositionally biased stretch (basic residues) spans 43 to 64; that stretch reads TRRKRKDAAKRRLAIKAARKAT.

This sequence belongs to the bacterial ribosomal protein bS21 family.

The sequence is that of Small ribosomal subunit protein bS21 from Dehalococcoides mccartyi (strain ATCC BAA-2100 / JCM 16839 / KCTC 5957 / BAV1).